Consider the following 423-residue polypeptide: MDKIIIEGGQTRLEGEVVIEGAKNAVLPLLAASILPSKGKTILRNVPILSDVFTMNNVVRGLDIRVDFNEAANEITVDASGHILDEAPYEYVSQMRASIVVLGPILARNGHAKVSMPGGCTIGSRPINLHLKGLEAMGATITQKGGDITAQADRLQGAMIYMDFPSVGATQNLMMAATLADGVTTIENAAREPEIVDLAQFLNKMGARIRGAGTETLTITGVTHLRGVEHDVVQDRIEAGTFMVAAAMTSGNVLIRDAVWEHNRPLISKLMEMGVSVTEEEYGIRVQANTPKLKPVTVKTLPHPGFPTDMQAQFTALMAVVNGESTMVETVFENRFQHLEEMRRMGLQSEILRETAMIHGGRQLQGAPVMSTDLRASAALILTGIVAQGVTIVNNLVHLDRGYYQFHEKLAKLGATISRSSEV.

23-24 (KN) is a binding site for phosphoenolpyruvate. Arg-96 is a binding site for UDP-N-acetyl-alpha-D-glucosamine. Cys-120 acts as the Proton donor in catalysis. 2-(S-cysteinyl)pyruvic acid O-phosphothioketal is present on Cys-120. The UDP-N-acetyl-alpha-D-glucosamine site is built by Asp-309 and Val-331.

The protein belongs to the EPSP synthase family. MurA subfamily.

The protein localises to the cytoplasm. It carries out the reaction phosphoenolpyruvate + UDP-N-acetyl-alpha-D-glucosamine = UDP-N-acetyl-3-O-(1-carboxyvinyl)-alpha-D-glucosamine + phosphate. It functions in the pathway cell wall biogenesis; peptidoglycan biosynthesis. Functionally, cell wall formation. Adds enolpyruvyl to UDP-N-acetylglucosamine. The protein is UDP-N-acetylglucosamine 1-carboxyvinyltransferase 1 of Streptococcus pyogenes serotype M1.